The primary structure comprises 559 residues: Potassium-transporting ATPase potassium-binding subunit (559 aa).

Transmembrane regions (helical) follow at residues 7-27 (LLIA…GSGL), 63-83 (LLAL…LLFW), 132-152 (GLTV…FALI), 170-190 (LVRI…LFFI), 253-273 (MVQM…FGEA), 283-303 (LLWA…WAEV), 327-347 (FGVL…CGAV), 356-376 (ALGG…FGGV), 379-399 (GLYG…LMIG), 416-436 (MTAL…ALAM), 484-504 (LLAF…MAIA), and 524-544 (GALF…LTFI).

This sequence belongs to the KdpA family. The system is composed of three essential subunits: KdpA, KdpB and KdpC.

The protein localises to the cell inner membrane. Part of the high-affinity ATP-driven potassium transport (or Kdp) system, which catalyzes the hydrolysis of ATP coupled with the electrogenic transport of potassium into the cytoplasm. This subunit binds the periplasmic potassium ions and delivers the ions to the membrane domain of KdpB through an intramembrane tunnel. The chain is Potassium-transporting ATPase potassium-binding subunit from Salmonella arizonae (strain ATCC BAA-731 / CDC346-86 / RSK2980).